Reading from the N-terminus, the 1129-residue chain is Protein DWARF 53-LIKE (1129 aa).

The Clp R domain maps to 8 to 180 (ARQCLSPAAV…KLAILRPAPP (173 aa)). Repeat regions lie at residues 12–85 (LSPA…LDRL) and 102–180 (VSNS…PAPP). A disordered region spans residues 519–573 (RYIGVPADKERSANPSKGSESIGVQKDVIKPCAVSAVHSSSTARPISSPSVTNKR). Positions 557-568 (SSSTARPISSPS) are enriched in low complexity. The short motif at 577–581 (LVLNL) is the EAR 1 element. The disordered stretch occupies residues 587 to 654 (KSDENLQERG…KRVEDSERSV (68 aa)). A compositionally biased stretch (polar residues) spans 596 to 608 (GMQSQHGTLSNAD). Positions 645 to 654 (KRVEDSERSV) are enriched in basic and acidic residues. 2 short sequence motifs (EAR) span residues 798-802 (LDLNL) and 975-980 (FDLNLP). The disordered stretch occupies residues 975-1001 (FDLNLPVDEDEPFDADDDSSSHENSYG). The segment covering 981–992 (VDEDEPFDADDD) has biased composition (acidic residues).

It belongs to the ClpA/ClpB family. Post-translationally, polyubiquitinated. Strigolactone, but not karrikin, triggers rapid SCF(D3)-dependent degradation via the proteasome.

In terms of biological role, repressor of strigolactones (SL) signaling. Subjected to a negative feedback control of SL signaling. The polypeptide is Protein DWARF 53-LIKE (Oryza sativa subsp. japonica (Rice)).